The chain runs to 79 residues: Conotoxin Cl9.4 (79 aa).

Positions 1 to 23 (MNCYLILTVALLLTSAMTGTTTA) are cleaved as a signal peptide. A propeptide spanning residues 24 to 37 (GQLNKKGVTLREDD) is cleaved from the precursor. 3 cysteine pairs are disulfide-bonded: C41/C58, C46/C68, and C48/C73.

In terms of tissue distribution, expressed by the venom duct.

The protein localises to the secreted. In Californiconus californicus (California cone), this protein is Conotoxin Cl9.4.